The primary structure comprises 178 residues: Endothelin-2 (178 aa).

Positions 1 to 24 are cleaved as a signal peptide; it reads MPAPGVHHPNTASPFLKTVAAGKG. Residues 25 to 46 constitute a propeptide that is removed on maturation; sequence QVAAAPEHPAPSARARGSHLRP. Intrachain disulfides connect C49-C63 and C51-C59. Positions 70–178 are excised as a propeptide; sequence VNTPGQTAPY…RPTHPRRRKR (109 aa). Residues 96–111 are endothelin-like; sequence CECSSGGDPACATFCH. The segment at 156–178 is disordered; the sequence is RFPRRPQEAGRQLRPTHPRRRKR. Over residues 169–178 the composition is skewed to basic residues; the sequence is RPTHPRRRKR.

Belongs to the endothelin/sarafotoxin family.

The protein resides in the secreted. In terms of biological role, endothelins are endothelium-derived vasoconstrictor peptides. This is Endothelin-2 (EDN2) from Canis lupus familiaris (Dog).